The following is a 484-amino-acid chain: Tubulin-like protein TubZ (484 aa).

32–33 provides a ligand contact to GTP; sequence QK. D64 provides a ligand contact to Mg(2+). Residues 140-142, N213, K237, and N241 contribute to the GTP site; that span reads GVG. The interval 408–484 is required to bind TubR-DNA complex; sequence RKQDEEKVDI…LKTSNPFKKR (77 aa). The segment at 428-484 is disordered; it reads TFNPYNKNQGFGGASRFSGGKNSAFKRQTSEATSTQNQQEEENIISTLKTSNPFKKR. A compositionally biased stretch (polar residues) spans 452-484; it reads FKRQTSEATSTQNQQEEENIISTLKTSNPFKKR.

This sequence belongs to the FtsZ family. TubZ subfamily. Forms filaments; a 2-stranded filament forms with the non-hydrolyzable GTP-gamma-S which is probably a precursor to the 4-stranded filament that forms in the presence of GTP. The 4-stranded form binds GDP. In vivo polymerizes to form dynamic filaments that often extend from one cell pole to the other, moving in a unidirectional manner. Filaments polymerize at the plus end and depolymerize at the minus end, a process called treadmilling. Polymerization only occurs above a critical concentration, it does not require upstream tubR. The tubC DNA-TubR complex binds to TubZ. Mg(2+) is required as a cofactor.

It localises to the cytoplasm. It catalyses the reaction GTP + H2O = GDP + phosphate + H(+). Its activity is regulated as follows. GTPase is inhibited by GTP-gamma-S, which also stabilizes filaments. In terms of biological role, a tubulin-like, filament forming GTPase; the motor component of the type III plasmid partition system which ensures correct segregation of the pBtoxis plasmid. Filaments may seed from the centromere-like site (tubC) when bound by DNA-binding protein TubR; the tubC-TubR complex stabilizes the TubZ filament. Filaments grow at the plus end and depolymerize at the minus end, a process called treadmilling. TubR-tubC complexes track the depolymerizing minus end of the filament, probably pulling plasmid within the cell. Required for pBtoxis plasmid replication/partition. Binds the TubR-tubC complex; GTP is not required for binding to TubR-tubC. TubZ alone does not bind DNA. Has a high GTPase activity in the presence of Mg(2+); in the presence of GTP assembles into dynamic filaments which upon polymerization bind almost exclusively GDP. Filament formation is cooperative, requiring a critical concentration. Formation occurs very quickly and is followed by disassembly as GTP is consumed. This is Tubulin-like protein TubZ from Bacillus thuringiensis subsp. israelensis.